Reading from the N-terminus, the 221-residue chain is Small ribosomal subunit protein uS5 (221 aa).

The S5 DRBM domain occupies 46-109 (IKDEVIDIKR…INAKLNIMEI (64 aa)).

This sequence belongs to the universal ribosomal protein uS5 family. As to quaternary structure, part of the 30S ribosomal subunit. Contacts protein S4.

In terms of biological role, with S4 and S12 plays an important role in translational accuracy. This chain is Small ribosomal subunit protein uS5, found in Thermoplasma volcanium (strain ATCC 51530 / DSM 4299 / JCM 9571 / NBRC 15438 / GSS1).